The following is a 347-amino-acid chain: Dehydratase asqC (347 aa).

The signal sequence occupies residues 1–18 (MRPAILAAFSTLPAAAKA). 7 N-linked (GlcNAc...) asparagine glycosylation sites follow: asparagine 51, asparagine 103, asparagine 131, asparagine 143, asparagine 215, asparagine 264, and asparagine 281.

The catalysed reaction is [(1'E)-5'-(3',3'-dimethyloxiran-2'-yl)-3'-hydroxy-3'-methylpent-1'-en-1'-yl]-quinolinone B = (1'E,3'E)-5-(3,3-dimethyloxiran-2-yl)-3-methylhexa-1,3-dienyl-quinolinone B + H2O. It functions in the pathway secondary metabolite biosynthesis. It participates in alkaloid biosynthesis. The protein operates within mycotoxin biosynthesis. Functionally, dehydratase; part of the gene cluster that mediates the biosynthesis of the aspoquinolone mycotoxins. Within the pathway, the dehydratase asqC catalyzes the dehydratation of the epoxide at C-3 to produce (1'E,3'E)-5-(3,3-dimethyloxiran-2-yl)-3-methylhexa-1,3-dienyl-quinolinone B. The first step of the pathway is catalyzed by the nonribosomal peptide synthetase asqK that condenses anthranilic acid and O-methyl-L-tyrosine to produce 4'-methoxycyclopeptin. 4'-methoxycyclopeptin is then converted to 4'-methoxydehydrocyclopeptin by the ketoglutarate-dependent dioxygenase asqJ. AsqJ also converts its first product 4'-methoxydehydrocyclopeptin to 4'-methoxycyclopenin. The following conversion of 4'-methoxycyclopenin into 4'-methoxyviridicatin is catalyzed by the cyclopenase asqI. 4'-methoxyviridicatin is the precursor of quinolone natural products, and is further converted to quinolinone B. The prenyltransferase asqH1 then catalyzes the canonical Friedel-Crafts alkylation of quinolinone B with dimethylallyl cation to yield dimethylallyl quinolone, which is subjected to FAD-dependent dehydrogenation by the FAD-linked oxidoreductase asqF to yield conjugated aryl diene. The delta(3') double bond then serves as the site of the second alkylation with DMAPP catalyzed by the prenyltransferase asqH2 to yield a carbenium ion intermediate, which can be attacked by H(2)O to yield a styrenyl quinolone containing a C3'-hydroxyprenyl chain. The FAD-dependent monooxygenase asqG performs epoxidation of the terminal C7'-C8' olefin. Finally, after dehydratation of the epoxide at C3 by asqC, the quinolone epoxide rearrangement protein asqO catalyzes an enzymatic 3-exo-tet cyclization to yield the cyclopropyl-THF ring system in aspoquinolone. The sequence is that of Dehydratase asqC from Emericella nidulans (strain FGSC A4 / ATCC 38163 / CBS 112.46 / NRRL 194 / M139) (Aspergillus nidulans).